The sequence spans 458 residues: Monomethylamine methyltransferase MtmB1 (458 aa).

Residue Pyl-202 is a non-standard amino acid, pyrrolysine.

It belongs to the monomethylamine methyltransferase family. In terms of assembly, dimer of homotrimers. Can form a complex with MtmC (MtmC1 or MtmC2).

It catalyses the reaction Co(I)-[methylamine-specific corrinoid protein] + methylamine + H(+) = methyl-Co(III)-[methylamine-specific corrinoid protein] + NH4(+). The protein operates within one-carbon metabolism; methanogenesis from methylamine. In terms of biological role, catalyzes the transfer of the methyl group from monomethylamine to the corrinoid cofactor of MtmC (MtmC1 or MtmC2). In Methanosarcina barkeri, this protein is Monomethylamine methyltransferase MtmB1 (mtmB1).